Consider the following 314-residue polypeptide: Methionyl-tRNA formyltransferase (314 aa).

112 to 115 (SLLP) contacts (6S)-5,6,7,8-tetrahydrofolate.

The protein belongs to the Fmt family.

It carries out the reaction L-methionyl-tRNA(fMet) + (6R)-10-formyltetrahydrofolate = N-formyl-L-methionyl-tRNA(fMet) + (6S)-5,6,7,8-tetrahydrofolate + H(+). In terms of biological role, attaches a formyl group to the free amino group of methionyl-tRNA(fMet). The formyl group appears to play a dual role in the initiator identity of N-formylmethionyl-tRNA by promoting its recognition by IF2 and preventing the misappropriation of this tRNA by the elongation apparatus. The polypeptide is Methionyl-tRNA formyltransferase (Legionella pneumophila (strain Corby)).